A 478-amino-acid polypeptide reads, in one-letter code: Ribulose bisphosphate carboxylase large chain (478 aa).

A propeptide spanning residues 1-2 is cleaved from the precursor; the sequence is MS. At Pro-3 the chain carries N-acetylproline. Lys-14 is modified (N6,N6,N6-trimethyllysine). Residues Asn-123 and Thr-173 each coordinate substrate. The Proton acceptor role is filled by Lys-175. Residue Lys-177 coordinates substrate. Mg(2+) is bound by residues Lys-201, Asp-203, and Glu-204. N6-carboxylysine is present on Lys-201. The active-site Proton acceptor is His-294. The substrate site is built by Arg-295, His-327, and Ser-379.

The protein belongs to the RuBisCO large chain family. Type I subfamily. As to quaternary structure, heterohexadecamer of 8 large chains and 8 small chains; disulfide-linked. The disulfide link is formed within the large subunit homodimers. Mg(2+) is required as a cofactor. The disulfide bond which can form in the large chain dimeric partners within the hexadecamer appears to be associated with oxidative stress and protein turnover.

Its subcellular location is the plastid. It is found in the chloroplast. It carries out the reaction 2 (2R)-3-phosphoglycerate + 2 H(+) = D-ribulose 1,5-bisphosphate + CO2 + H2O. The enzyme catalyses D-ribulose 1,5-bisphosphate + O2 = 2-phosphoglycolate + (2R)-3-phosphoglycerate + 2 H(+). RuBisCO catalyzes two reactions: the carboxylation of D-ribulose 1,5-bisphosphate, the primary event in carbon dioxide fixation, as well as the oxidative fragmentation of the pentose substrate in the photorespiration process. Both reactions occur simultaneously and in competition at the same active site. This is Ribulose bisphosphate carboxylase large chain from Lemna minor (Common duckweed).